The primary structure comprises 537 residues: Inositol phosphorylceramide glucuronosyltransferase 1 (537 aa).

Residues Thr6 to Ser26 form a helical membrane-spanning segment. Positions 124 and 126 each coordinate Mn(2+). Substrate-binding positions include Asp124–Asp126, Asn153–Gly155, Thr180–Gln184, and His248–Lys255. His248 is a binding site for Mn(2+). 5 consecutive transmembrane segments (helical) span residues Asp293–Tyr313, Val375–Val395, Val406–Phe426, Met468–Phe488, and Met494–Val514.

It belongs to the glycosyltransferase 8 family. Glycogenin subfamily. Requires Mn(2+) as cofactor. Expressed in seedlings, roots, leaves, stems and siliques.

The protein localises to the golgi apparatus membrane. It carries out the reaction glucuronate acceptor + UDP-alpha-D-glucuronate = acceptor beta-D-glucuronoside + UDP + H(+). It catalyses the reaction a 1D-myo-inositol-1-phospho-N-[(R)-2-hydroxy-very-long-chain fatty acyl]-(R)-4-hydroxysphingoid base + UDP-alpha-D-glucuronate = an alpha-D-glucuronosyl-(1&lt;-&gt;6)-1D-myo-inositol-1-phospho-N-[(R)-2-hydroxy-very-long-chain fatty acyl]-(R)-4-hydroxysphingoid base + UDP + H(+). It functions in the pathway sphingolipid metabolism. In terms of biological role, mediates the transfer of glucuronic acid (GlcA) from UDP-GlcA to glycosyl inositol phosphorylceramides (GIPCs). The formation of GIPCs sphingolipids is essential for pollen function, plant growth and defense. Required for global fitness. In Arabidopsis thaliana (Mouse-ear cress), this protein is Inositol phosphorylceramide glucuronosyltransferase 1.